A 165-amino-acid polypeptide reads, in one-letter code: Protein AIG2 C (165 aa).

Substrate is bound at residue 14–19 (YGSILE). E82 acts as the Proton acceptor in catalysis.

This sequence belongs to the gamma-glutamylcyclotransferase family. In terms of tissue distribution, expressed in floral organs, leaves, stems and roots.

Its function is as follows. Putative gamma-glutamylcyclotransferase. The sequence is that of Protein AIG2 C from Arabidopsis thaliana (Mouse-ear cress).